An 803-amino-acid chain; its full sequence is DNA polymerase 2 (803 aa).

It belongs to the DNA polymerase type-B family.

It carries out the reaction DNA(n) + a 2'-deoxyribonucleoside 5'-triphosphate = DNA(n+1) + diphosphate. The protein is DNA polymerase 2 (polB) of Aeropyrum pernix (strain ATCC 700893 / DSM 11879 / JCM 9820 / NBRC 100138 / K1).